Here is a 218-residue protein sequence, read N- to C-terminus: Pyridoxine/pyridoxamine 5'-phosphate oxidase (218 aa).

Residues 14–17 (RREY) and lysine 72 contribute to the substrate site. Residues 67-72 (RIVLLK), 82-83 (YT), arginine 88, lysine 89, and glutamine 111 each bind FMN. Residues tyrosine 129, arginine 133, and serine 137 each coordinate substrate. FMN is bound by residues 146–147 (QS) and tryptophan 191. Residue 197-199 (RLH) coordinates substrate. Arginine 201 contributes to the FMN binding site.

Belongs to the pyridoxamine 5'-phosphate oxidase family. Homodimer. FMN serves as cofactor.

The enzyme catalyses pyridoxamine 5'-phosphate + O2 + H2O = pyridoxal 5'-phosphate + H2O2 + NH4(+). The catalysed reaction is pyridoxine 5'-phosphate + O2 = pyridoxal 5'-phosphate + H2O2. The protein operates within cofactor metabolism; pyridoxal 5'-phosphate salvage; pyridoxal 5'-phosphate from pyridoxamine 5'-phosphate: step 1/1. It functions in the pathway cofactor metabolism; pyridoxal 5'-phosphate salvage; pyridoxal 5'-phosphate from pyridoxine 5'-phosphate: step 1/1. In terms of biological role, catalyzes the oxidation of either pyridoxine 5'-phosphate (PNP) or pyridoxamine 5'-phosphate (PMP) into pyridoxal 5'-phosphate (PLP). The chain is Pyridoxine/pyridoxamine 5'-phosphate oxidase from Escherichia coli (strain SMS-3-5 / SECEC).